We begin with the raw amino-acid sequence, 292 residues long: D-tagatose-1,6-bisphosphate aldolase subunit KbaY (292 aa).

The active-site Proton donor is the Asp-82. Residues His-83 and His-180 each coordinate Zn(2+). Gly-181 provides a ligand contact to dihydroxyacetone phosphate. Zn(2+) is bound at residue His-208. Residues 209 to 211 (GAS) and 230 to 233 (NVAT) contribute to the dihydroxyacetone phosphate site.

It belongs to the class II fructose-bisphosphate aldolase family. TagBP aldolase KbaY subfamily. Homotetramer. Forms a complex with KbaZ. Requires Zn(2+) as cofactor.

It catalyses the reaction D-tagatofuranose 1,6-bisphosphate = D-glyceraldehyde 3-phosphate + dihydroxyacetone phosphate. It functions in the pathway carbohydrate metabolism; D-tagatose 6-phosphate degradation; D-glyceraldehyde 3-phosphate and glycerone phosphate from D-tagatose 6-phosphate: step 2/2. Its function is as follows. Catalytic subunit of the tagatose-1,6-bisphosphate aldolase KbaYZ, which catalyzes the reversible aldol condensation of dihydroxyacetone phosphate (DHAP or glycerone-phosphate) with glyceraldehyde 3-phosphate (G3P) to produce tagatose 1,6-bisphosphate (TBP). Requires KbaZ subunit for full activity and stability. This chain is D-tagatose-1,6-bisphosphate aldolase subunit KbaY, found in Enterobacter sp. (strain 638).